Consider the following 70-residue polypeptide: Putative antitoxin VapB34 (70 aa).

Its function is as follows. Antitoxin component of a possible type II toxin-antitoxin (TA) system. The cognate toxin is VapC34. The chain is Putative antitoxin VapB34 (vapB34) from Mycobacterium tuberculosis (strain CDC 1551 / Oshkosh).